The sequence spans 428 residues: Probable protein phosphatase 2C 12 (428 aa).

The region spanning Lys24 to Ile293 is the PPM-type phosphatase domain. Residues Asp69, Gly70, Asp245, and Asp284 each coordinate Mn(2+). Residues Ala301–Lys331 are disordered.

This sequence belongs to the PP2C family. The cofactor is Mg(2+). Mn(2+) is required as a cofactor.

It catalyses the reaction O-phospho-L-seryl-[protein] + H2O = L-seryl-[protein] + phosphate. The catalysed reaction is O-phospho-L-threonyl-[protein] + H2O = L-threonyl-[protein] + phosphate. The polypeptide is Probable protein phosphatase 2C 12 (Arabidopsis thaliana (Mouse-ear cress)).